A 301-amino-acid chain; its full sequence is tRNA pseudouridine synthase B (301 aa).

The active-site Nucleophile is D38.

The protein belongs to the pseudouridine synthase TruB family. Type 1 subfamily.

It carries out the reaction uridine(55) in tRNA = pseudouridine(55) in tRNA. Functionally, responsible for synthesis of pseudouridine from uracil-55 in the psi GC loop of transfer RNAs. The protein is tRNA pseudouridine synthase B of Limosilactobacillus reuteri (strain DSM 20016) (Lactobacillus reuteri).